Here is a 462-residue protein sequence, read N- to C-terminus: Lysophospholipid acyltransferase 1 (462 aa).

9 helical membrane-spanning segments follow: residues 9–29, 52–72, 84–104, 158–178, 211–231, 263–283, 353–373, 396–416, and 431–451; these read SIGV…TIPV, FLSY…PMTI, CGII…VFYM, SLIE…GPVY, AILQ…QYPL, YFIW…FSGW, AVWH…ALMI, IMVF…AVGF, and VYYI…VVPA. Histidine 356 is a catalytic residue.

It belongs to the membrane-bound acyltransferase family. As to expression, expressed in roots, rosette leaves, petals, stigma, chalazal endosperm of developing seeds and vascular bundles of siliques.

Its subcellular location is the endoplasmic reticulum membrane. It catalyses the reaction a 1-acyl-sn-glycero-3-phosphocholine + an acyl-CoA = a 1,2-diacyl-sn-glycero-3-phosphocholine + CoA. The enzyme catalyses 1-(9Z-octadecenoyl)-sn-glycero-3-phosphocholine + (9Z)-octadecenoyl-CoA = 1,2-di-(9Z-octadecenoyl)-sn-glycero-3-phosphocholine + CoA. It carries out the reaction 1-(9Z-octadecenoyl)-sn-glycero-3-phosphocholine + (9Z,12Z)-octadecadienoyl-CoA = 1-(9Z)-octadecenoyl-2-(9Z,12Z)-octadecadienoyl-sn-glycero-3-phosphocholine + CoA. The catalysed reaction is (9Z,12Z,15Z)-octadecatrienoyl-CoA + 1-(9Z-octadecenoyl)-sn-glycero-3-phosphocholine = 1-(9Z-octadecaenoyl)-2-(9Z,12Z,15Z-octadecatrienoyl)-sn-glycero-3-phosphocholine + CoA. It catalyses the reaction a 1-acyl-sn-glycero-3-phosphoethanolamine + an acyl-CoA = a 1,2-diacyl-sn-glycero-3-phosphoethanolamine + CoA. The enzyme catalyses a 1-acyl-sn-glycero-3-phospho-L-serine + an acyl-CoA = a 1,2-diacyl-sn-glycero-3-phospho-L-serine + CoA. Its function is as follows. Lysophospholipid acyltransferase with broad specificity. Mediates the conversion of lysophosphatidylethanolamine (1-acyl-sn-glycero-3-phosphoethanolamine or LPE) into phosphatidylethanolamine (1,2-diacyl-sn-glycero-3-phosphoethanolamine or PE) (LPEAT activity). Catalyzes the acylation of lysophosphatidylserine (1-acyl-2-hydroxy-sn-glycero-3-phospho-L-serine or LPS) into phosphatidylserine (1,2-diacyl-sn-glycero-3-phospho-L-serine or PS) (LPSAT activity). Can convert lysophosphatidylcholine (1-acyl-sn-glycero-3-phosphocholine or LPC) into phosphatidylcholine (1,2-diacyl-sn-glycero-3-phosphocholine or PC) (LPCAT activity). Exhibits preference for C18-unsaturated acyl-CoA when transferring an acyl group to lysophosphatidylcholine. Can also utilize lysophosphatidylglycerol (LPG) as substrate in vitro. Has neither activity towards lysophosphatidic acid (LPA) nor lysophosphatidylinositol (LPI). Lysophospholipid acyltransferases catalyze the reacylation step of the phospholipid remodeling pathway also known as the Lands cycle. The primary function of the Lands cycle is to provide a route for acyl remodeling to modify fatty acid (FA) composition of phospholipids derived from the Kennedy pathway. Is involved in PC acyl editing and phosphocholine headgroup exchange between PC and diacylglycerols. This processes control the majority of acyl fluxes through PC to provide polyunsaturated fatty acids for triacylglycerols synthesis in seeds. Involved with LPCAT2 in the direct incorporation of newly synthesized fatty acids exported form the chloroplast into PC through acyl editing. The polypeptide is Lysophospholipid acyltransferase 1 (Arabidopsis thaliana (Mouse-ear cress)).